The chain runs to 362 residues: Cobalt-precorrin-5B C(1)-methyltransferase (362 aa).

It belongs to the CbiD family.

The enzyme catalyses Co-precorrin-5B + S-adenosyl-L-methionine = Co-precorrin-6A + S-adenosyl-L-homocysteine. It participates in cofactor biosynthesis; adenosylcobalamin biosynthesis; cob(II)yrinate a,c-diamide from sirohydrochlorin (anaerobic route): step 6/10. Functionally, catalyzes the methylation of C-1 in cobalt-precorrin-5B to form cobalt-precorrin-6A. The polypeptide is Cobalt-precorrin-5B C(1)-methyltransferase (Burkholderia vietnamiensis (strain G4 / LMG 22486) (Burkholderia cepacia (strain R1808))).